Here is a 101-residue protein sequence, read N- to C-terminus: Pore-forming peptide amoebapore C (101 aa).

The N-terminal stretch at 1 to 24 (MKLFVLLCVFVLCLASQEKQQDRE) is a signal peptide. The region spanning 25-101 (IPVLCPVCTS…KLICGLIHAC (77 aa)) is the Saposin B-type domain. 3 disulfides stabilise this stretch: C29/C101, C32/C95, and C59/C70.

Monomer. Homodimer. Hexamer; formed during insertion in the membrane.

The protein resides in the cytoplasmic granule. In terms of biological role, forms pores in the cell membrane of host cells. Has antibacterial activity against M.luteus, no activity against E.coli. Implicated in the cytolytic activity of the parasite. This is Pore-forming peptide amoebapore C from Entamoeba histolytica (strain ATCC 30459 / HM-1:IMSS / ABRM).